Reading from the N-terminus, the 552-residue chain is Metal transporter Nramp6.1 (552 aa).

N-linked (GlcNAc...) asparagine glycosylation is present at Asn-11. 7 helical membrane-spanning segments follow: residues 55 to 75 (FLSY…PGNL), 88 to 108 (ELLW…SLAA), 133 to 155 (CLWL…GTAF), 159 to 181 (ILFN…LLLG), 189 to 209 (KLEL…FGEM), 238 to 258 (IALL…ALVL), and 275 to 295 (YFLI…LAVI). Asn-306 carries N-linked (GlcNAc...) asparagine glycosylation. The next 5 helical transmembrane spans lie at 338–358 (IYAI…TYAG), 377–397 (LVTR…GGSS), 402–422 (LIII…IPLL), 438–458 (IYII…NIYY), and 478–498 (VFIG…VIYL). The tract at residues 511-552 (PNKNDPQQQTNMENGLAKSTEGPEMVDRAPYREDLADIPLPE) is disordered. Residues 514–523 (NDPQQQTNME) are compositionally biased toward polar residues. Over residues 535-545 (MVDRAPYREDL) the composition is skewed to basic and acidic residues.

Belongs to the NRAMP (TC 2.A.55) family.

The protein localises to the membrane. Probable divalent metal transporter. The chain is Metal transporter Nramp6.1 from Populus trichocarpa (Western balsam poplar).